A 514-amino-acid chain; its full sequence is Periplasmic [NiFeSe] hydrogenase large subunit (514 aa).

Glutamate 52 is a binding site for Fe cation. Positions 71 and 74 each coordinate Ni(2+). Cysteine 74 and isoleucine 445 together coordinate Fe cation. Selenocysteine 493 and cysteine 496 together coordinate Ni(2+). Position 493 (selenocysteine 493) is a non-standard amino acid, selenocysteine. Residues cysteine 496 and histidine 499 each coordinate Fe cation.

Belongs to the [NiFe]/[NiFeSe] hydrogenase large subunit family. As to quaternary structure, heterodimer of a large and a small subunit. The cofactor is Fe cation. It depends on Ni(2+) as a cofactor.

Its subcellular location is the periplasm. The enzyme catalyses H2 + A = AH2. In Desulfomicrobium baculatum (Desulfovibrio baculatus), this protein is Periplasmic [NiFeSe] hydrogenase large subunit.